The sequence spans 739 residues: Putative apoptosis-inducing factor 1, mitochondrial (739 aa).

The N-terminal 42 residues, M1–P42, are a transit peptide targeting the mitochondrion. The segment at Y257–D564 is FAD-dependent oxidoreductase. FAD contacts are provided by residues G261 to A265, R295, K300, V358, R410, D564, and H580 to H581. The interval V644–P681 is disordered. The segment covering P656–G676 has biased composition (low complexity).

This sequence belongs to the FAD-dependent oxidoreductase family. FAD serves as cofactor.

The protein resides in the mitochondrion intermembrane space. It carries out the reaction A + NADH + H(+) = AH2 + NAD(+). Probable NADH oxidoreductase. Mitochondrial effector of cell death that plays roles in developmentally regulated cell death and normal mitochondrial function. The chain is Putative apoptosis-inducing factor 1, mitochondrial (AIF) from Drosophila melanogaster (Fruit fly).